We begin with the raw amino-acid sequence, 181 residues long: Shikimate kinase 2 (181 aa).

An ATP-binding site is contributed by 12 to 17 (GCGKTT). Residues threonine 16 and aspartate 32 each contribute to the Mg(2+) site. The substrate site is built by aspartate 34, arginine 58, and glycine 79. The LID domain stretch occupies residues 112–126 (EAEPEADLRPTLTGK). Arginine 120 provides a ligand contact to ATP. Substrate is bound at residue arginine 139.

Belongs to the shikimate kinase family. AroL subfamily. As to quaternary structure, monomer. The cofactor is Mg(2+).

The protein localises to the cytoplasm. It carries out the reaction shikimate + ATP = 3-phosphoshikimate + ADP + H(+). Its pathway is metabolic intermediate biosynthesis; chorismate biosynthesis; chorismate from D-erythrose 4-phosphate and phosphoenolpyruvate: step 5/7. Its function is as follows. Catalyzes the specific phosphorylation of the 3-hydroxyl group of shikimic acid using ATP as a cosubstrate. The polypeptide is Shikimate kinase 2 (Salmonella enteritidis PT4 (strain P125109)).